The chain runs to 646 residues: Aquaglycerol porin AQY3 (646 aa).

A compositionally biased stretch (low complexity) spans 1 to 14 (MSYESGRSSSSSES). 2 disordered regions span residues 1–68 (MSYE…SRNK) and 175–262 (KNMD…KKRT). Over 1-350 (MSYESGRSSS…AKIRYHMREP (350 aa)) the chain is Cytoplasmic. Positions 19 to 41 (TLKEEPNGKIAWEESVKKSRENN) are enriched in basic and acidic residues. Positions 190 to 201 (TDISRGGSTTSV) are enriched in polar residues. The helical transmembrane segment at 351–371 (FAEFLGTLVLVIFGVGGNLQA) threads the bilayer. Over 372–383 (TVTKGSGGSYES) the chain is Extracellular. A helical transmembrane segment spans residues 384–404 (LSFAWGFGCMLGVYVAGGISG). Residues 405 to 427 (GHINPAVTISMAIFRKFPWKKVP) lie on the Cytoplasmic side of the membrane. Residues 408 to 410 (NPA) carry the NPA 1 motif. A helical transmembrane segment spans residues 428 to 448 (VYIVAQIIGAYFGGAMAYGYF). Residues 449-481 (WSSITEFEGGPHIRTTATGACLFTDPKSYVTWR) lie on the Extracellular side of the membrane. The helical transmembrane segment at 482 to 502 (NAFFDEFIGASILVGCLMALL) threads the bilayer. Residues 503–509 (DDSNAPP) are Cytoplasmic-facing. Residues 510 to 530 (GNGMTALIIGFLVAAIGMALG) form a helical membrane-spanning segment. At 531 to 569 (YQTSFTINPARDLGPRIFASMIGYGPHAFHLTHWWWTWG) the chain is on the extracellular side. The NPA 2 signature appears at 538 to 540 (NPA). A helical transmembrane segment spans residues 570–590 (AWGGPIAGGIAGALIYDIFIF). The Cytoplasmic segment spans residues 591–646 (TGCESPVNYPDNGYIENRVGKLLHAEFHQNDGTVSDESGVNSNSNTGSKKSVPTSS). Positions 621-646 (DGTVSDESGVNSNSNTGSKKSVPTSS) are disordered.

Belongs to the MIP/aquaporin (TC 1.A.8) family.

The protein localises to the cell membrane. It catalyses the reaction glycerol(in) = glycerol(out). In terms of biological role, channel protein that mediates glycerol entry under ethanol stimulation. Does not seem to mediate glycerol uptake under standard conditions. The protein is Aquaglycerol porin AQY3 of Saccharomyces cerevisiae (strain ATCC 204508 / S288c) (Baker's yeast).